The primary structure comprises 68 residues: Sec-independent protein translocase protein TatA (68 aa).

Residues 1–21 (MGSFSIWHWLIVLVVVLLLFG) form a helical membrane-spanning segment. The interval 46-68 (EEAASADKTIDGKTVEHKSDEVR) is disordered. Over residues 53–68 (KTIDGKTVEHKSDEVR) the composition is skewed to basic and acidic residues.

The protein belongs to the TatA/E family. In terms of assembly, the Tat system comprises two distinct complexes: a TatABC complex, containing multiple copies of TatA, TatB and TatC subunits, and a separate TatA complex, containing only TatA subunits. Substrates initially bind to the TatABC complex, which probably triggers association of the separate TatA complex to form the active translocon.

Its subcellular location is the cell inner membrane. In terms of biological role, part of the twin-arginine translocation (Tat) system that transports large folded proteins containing a characteristic twin-arginine motif in their signal peptide across membranes. TatA could form the protein-conducting channel of the Tat system. The sequence is that of Sec-independent protein translocase protein TatA from Sinorhizobium fredii (strain NBRC 101917 / NGR234).